A 274-amino-acid chain; its full sequence is Regulator of G-protein signaling rgs-11 (274 aa).

The RGS domain occupies 137–256; sequence SPGLLAASKY…LEDPLYLDLL (120 aa).

The sequence is that of Regulator of G-protein signaling rgs-11 (rgs-11) from Caenorhabditis elegans.